We begin with the raw amino-acid sequence, 399 residues long: Enoyl-[acyl-carrier-protein] reductase [NADH] (399 aa).

NAD(+) contacts are provided by residues 48-53 (GASTGY), 74-75 (FE), 111-112 (DA), and 139-140 (LA). Tyrosine 225 lines the substrate pocket. Residue tyrosine 235 is the Proton donor of the active site. Residues lysine 244 and 274–276 (VVT) each bind NAD(+).

Belongs to the TER reductase family. Monomer.

It catalyses the reaction a 2,3-saturated acyl-[ACP] + NAD(+) = a (2E)-enoyl-[ACP] + NADH + H(+). The protein operates within lipid metabolism; fatty acid biosynthesis. Its function is as follows. Involved in the final reduction of the elongation cycle of fatty acid synthesis (FAS II). Catalyzes the reduction of a carbon-carbon double bond in an enoyl moiety that is covalently linked to an acyl carrier protein (ACP). This is Enoyl-[acyl-carrier-protein] reductase [NADH] from Yersinia enterocolitica serotype O:8 / biotype 1B (strain NCTC 13174 / 8081).